Here is a 420-residue protein sequence, read N- to C-terminus: MDKFLISGSGPLTGELRISGSKNAALPILAATILAQGKVRLANVPHLNDISTMIALLRTLGLTIEIQGDHVVIVDPNTINSYTAPYELVKTMRASILVLGPLLARYGEANVSFPGGCAIGSRPVDIHLRGLEAMGASIEIDGGYIRARRQGRLKGCHFLMDTVTVGGTENLLMAAVLAEGKTILENAAREPEIVDLANLLVAMGARISGIGTSTLTIEGVESLTGCDYSVMPDRIETGTYLVAAAASRGKVRLTHTSASILEAVIVKLQEAGADVTTGEDWIALDMNGRRPKAVSLKTAPYPAFPTDMQSQFMALNAVADGISHITETIFENRLVQVAELKRMGAHIELEHNTAIVTGVERLKAAPVMASDLRASASLVIAGLVADGETLIDRIYHIDRGYEAIEAKFQALGASVRRIKS.

Residue 22-23 participates in phosphoenolpyruvate binding; the sequence is KN. A UDP-N-acetyl-alpha-D-glucosamine-binding site is contributed by R93. Catalysis depends on C117, which acts as the Proton donor. 2-(S-cysteinyl)pyruvic acid O-phosphothioketal is present on C117. Residues D307 and I329 each coordinate UDP-N-acetyl-alpha-D-glucosamine.

This sequence belongs to the EPSP synthase family. MurA subfamily.

The protein localises to the cytoplasm. It carries out the reaction phosphoenolpyruvate + UDP-N-acetyl-alpha-D-glucosamine = UDP-N-acetyl-3-O-(1-carboxyvinyl)-alpha-D-glucosamine + phosphate. It participates in cell wall biogenesis; peptidoglycan biosynthesis. Its function is as follows. Cell wall formation. Adds enolpyruvyl to UDP-N-acetylglucosamine. This chain is UDP-N-acetylglucosamine 1-carboxyvinyltransferase, found in Cellvibrio japonicus (strain Ueda107) (Pseudomonas fluorescens subsp. cellulosa).